The chain runs to 110 residues: Proline-rich protein 15-like protein A (110 aa).

Disordered regions lie at residues 29–51 (IAGD…TDSQ) and 65–110 (TKGR…KSGK). Over residues 65–85 (TKGRHVKVSHSGRFKEKKRIR) the composition is skewed to basic residues. Residues 100–110 (TTANENNKSGK) show a composition bias toward polar residues.

The protein belongs to the PRR15 family.

The polypeptide is Proline-rich protein 15-like protein A (prr15la) (Danio rerio (Zebrafish)).